Consider the following 204-residue polypeptide: Large ribosomal subunit protein uL22m (204 aa).

The transit peptide at 1–38 directs the protein to the mitochondrion; sequence MAAVILERLGALWVQNLRGKLALGILPQSHIHTSASLE.

Belongs to the universal ribosomal protein uL22 family. In terms of assembly, component of the mitochondrial ribosome large subunit (39S) which comprises a 16S rRNA and about 50 distinct proteins.

The protein localises to the mitochondrion. The chain is Large ribosomal subunit protein uL22m (MRPL22) from Bos taurus (Bovine).